A 328-amino-acid polypeptide reads, in one-letter code: Alcohol-sensitive RING finger protein 1 (328 aa).

An RING-type 1; atypical zinc finger spans residues 18–61; it reads CSICWESMPSGVGRLMPCGHEYHLACIRKWFHLHSGNRSCPVCR. An RING-type 2; atypical zinc finger spans residues 129–177; it reads CGICGEMNGDIDTCCNRCHHMYHHSCLGQLLVEVNAEREQGWSHCIFCY.

The protein resides in the cytoplasm. The protein localises to the nucleus. In terms of biological role, required for tolerance to alcohol. In Eremothecium gossypii (strain ATCC 10895 / CBS 109.51 / FGSC 9923 / NRRL Y-1056) (Yeast), this protein is Alcohol-sensitive RING finger protein 1 (ASR1).